The primary structure comprises 268 residues: MSEKIVFYGKEQLQRIRIFNYSESNDKTLIVLHGGGWRDPRNSYNDFEDMANYILEEKKATNINIIGIDYRLSPFIKHPVHLIDVLTAFRYILENYKTGQLSIVGHSVGATLLLEILNYVEIIQTGLEQLETSEPSIEELQTLFDFISKNLTFKTMYFLDGIYDVRALLEEYPSYDFFVKSAFVSTVAIEEASQLSWKQHNEAFKIAVDKYEILHSLEDELLSLNQPKLFAKYLQDRKIECSFRTGNWGEHEQVYRSQAVSEHVLQNM.

Residues 33–37 carry the HGGXW motif; that stretch reads HGGGW. S107 (nucleophile) is an active-site residue. Catalysis depends on residues D219 and H251.

It belongs to the kynurenine formamidase family. Homodimer.

It carries out the reaction N-formyl-L-kynurenine + H2O = L-kynurenine + formate + H(+). It participates in amino-acid degradation; L-tryptophan degradation via kynurenine pathway; L-kynurenine from L-tryptophan: step 2/2. Functionally, catalyzes the hydrolysis of N-formyl-L-kynurenine to L-kynurenine, the second step in the kynurenine pathway of tryptophan degradation. Kynurenine may be further oxidized to nicotinic acid, NAD(H) and NADP(H). Required for elimination of toxic metabolites. The protein is Kynurenine formamidase of Scheffersomyces stipitis (strain ATCC 58785 / CBS 6054 / NBRC 10063 / NRRL Y-11545) (Yeast).